Here is a 639-residue protein sequence, read N- to C-terminus: Homeobox protein 9 (639 aa).

Disordered regions lie at residues 1–45 (MLNS…DKQN), 66–144 (SPNH…DDNS), 157–179 (NQNQNQNQNQNQNQNQNQNQNQN), 262–313 (PRTL…SSGT), 331–422 (SESS…QTSN), and 436–547 (TNKN…NNEN). Residues 72 to 109 (ANNNNNNNNNNNNNNNNNNNNNNNNNNNNNNNNNNNIQ) adopt a coiled-coil conformation. Composition is skewed to low complexity over residues 73-119 (NNNN…SNNN) and 126-142 (GSLNSSNDNNFNSGNDD). Coiled coils occupy residues 152–184 (SNQNQNQNQNQNQNQNQNQNQNQNQNQNQKDSW) and 230–296 (EIEI…NINE). Residues 266 to 300 (NNSSDSISENINNNNNNNNNNNNNNNNNINESNIN) show a composition bias toward low complexity. A compositionally biased stretch (basic and acidic residues) spans 345 to 354 (QPRKVPRDLN). The segment covering 358–399 (NNNINYANNNNNNNNNNNNNNHNNNINNNNNNNNNNNNNSNN) has biased composition (low complexity). A coiled-coil region spans residues 365–396 (NNNNNNNNNNNNNNHNNNINNNNNNNNNNNNN). A compositionally biased stretch (polar residues) spans 405–422 (GSITNSVNIKPSKDQTSN). The span at 436 to 526 (TNKNNNNNNN…NNNLTSSSNN (91 aa)) shows a compositional bias: low complexity. Residues 532–547 (GNTSPNQSSANGNNEN) are compositionally biased toward polar residues. The segment at residues 559–621 (KRKKRGKLPG…NARRRILPRQ (63 aa)) is a DNA-binding region (homeobox).

Its subcellular location is the nucleus. Functionally, putative transcription factor. In Dictyostelium discoideum (Social amoeba), this protein is Homeobox protein 9 (hbx9).